The primary structure comprises 396 residues: Tryptophan synthase beta chain (396 aa).

At lysine 86 the chain carries N6-(pyridoxal phosphate)lysine.

The protein belongs to the TrpB family. Tetramer of two alpha and two beta chains. It depends on pyridoxal 5'-phosphate as a cofactor.

The enzyme catalyses (1S,2R)-1-C-(indol-3-yl)glycerol 3-phosphate + L-serine = D-glyceraldehyde 3-phosphate + L-tryptophan + H2O. Its pathway is amino-acid biosynthesis; L-tryptophan biosynthesis; L-tryptophan from chorismate: step 5/5. The beta subunit is responsible for the synthesis of L-tryptophan from indole and L-serine. The sequence is that of Tryptophan synthase beta chain from Francisella tularensis subsp. novicida (strain U112).